A 145-amino-acid chain; its full sequence is UPF0735 ACT domain-containing protein CLD_1535 (145 aa).

An ACT domain is found at 69–144 (TIGLLLGHER…NVIKVDLIAM (76 aa)).

This sequence belongs to the UPF0735 family.

The chain is UPF0735 ACT domain-containing protein CLD_1535 from Clostridium botulinum (strain Okra / Type B1).